Consider the following 327-residue polypeptide: Biotin synthase (327 aa).

In terms of domain architecture, Radical SAM core spans 49–282 (FNKEKIDLCS…NKVIRLCGGR (234 aa)). [4Fe-4S] cluster-binding residues include Cys-67, Cys-71, and Cys-74. [2Fe-2S] cluster is bound by residues Ser-110, Cys-142, Cys-201, and Arg-277.

Belongs to the radical SAM superfamily. Biotin synthase family. In terms of assembly, homodimer. [4Fe-4S] cluster serves as cofactor. Requires [2Fe-2S] cluster as cofactor.

The catalysed reaction is (4R,5S)-dethiobiotin + (sulfur carrier)-SH + 2 reduced [2Fe-2S]-[ferredoxin] + 2 S-adenosyl-L-methionine = (sulfur carrier)-H + biotin + 2 5'-deoxyadenosine + 2 L-methionine + 2 oxidized [2Fe-2S]-[ferredoxin]. It functions in the pathway cofactor biosynthesis; biotin biosynthesis; biotin from 7,8-diaminononanoate: step 2/2. Catalyzes the conversion of dethiobiotin (DTB) to biotin by the insertion of a sulfur atom into dethiobiotin via a radical-based mechanism. In Methanococcus maripaludis (strain DSM 14266 / JCM 13030 / NBRC 101832 / S2 / LL), this protein is Biotin synthase.